Reading from the N-terminus, the 330-residue chain is G-protein coupled receptor 74 (330 aa).

7 helical membrane-spanning segments follow: residues 50-70 (LIVV…NLWL), 85-105 (FILI…IFSI), 121-141 (MVVF…LCFD), 160-180 (WVFC…QKAL), 210-230 (VAVS…CIFY), 252-272 (MLLF…LSFI), and 295-315 (LPLL…IYIL). An intrachain disulfide couples C117 to C195.

The protein belongs to the G-protein coupled receptor 1 family.

The protein resides in the host membrane. This Equus caballus (Horse) protein is G-protein coupled receptor 74 (74).